The sequence spans 767 residues: 5-methyltetrahydropteroyltriglutamate--homocysteine methyltransferase (767 aa).

Lys126 is a 5-methyltetrahydropteroyltri-L-glutamate binding site. Residues 445–447 (IGS) and Glu498 each bind L-homocysteine. L-methionine contacts are provided by residues 445-447 (IGS) and Glu498. Residues 529–530 (RC) and Trp575 each bind 5-methyltetrahydropteroyltri-L-glutamate. Residue Asp613 coordinates L-homocysteine. Asp613 contacts L-methionine. Residue Glu619 participates in 5-methyltetrahydropteroyltri-L-glutamate binding. Zn(2+) is bound by residues His655, Cys657, and Glu679. The active-site Proton donor is His708. Cys740 lines the Zn(2+) pocket.

Belongs to the vitamin-B12 independent methionine synthase family. Zn(2+) serves as cofactor.

It carries out the reaction 5-methyltetrahydropteroyltri-L-glutamate + L-homocysteine = tetrahydropteroyltri-L-glutamate + L-methionine. The protein operates within amino-acid biosynthesis; L-methionine biosynthesis via de novo pathway; L-methionine from L-homocysteine (MetE route): step 1/1. Catalyzes the transfer of a methyl group from 5-methyltetrahydrofolate to homocysteine resulting in methionine formation. In Psychromonas ingrahamii (strain DSM 17664 / CCUG 51855 / 37), this protein is 5-methyltetrahydropteroyltriglutamate--homocysteine methyltransferase.